The sequence spans 261 residues: MSANSDVATRVIPCLDVDNGRVVKGVNFENLRDAGDPVELAAAYDAEGADELTFLDVTASSSGRSTMLEVVRRTAEQVFIPLTVGGGVRSVDDVDVLLRAGADKVSVNTAAIARPELLAEMARQFGSQCIVLSVDARTVPKGEQPTPSGWEVTTHGGRRGTGIDAIEWATRGAELGVGEILLNSMDRDGTKAGFDLKMLSAVRAAVSVPVIASGGAGAVEHFAPAVQAGADAVLAASVFHFRELTVAEVKASMKAAGITVR.

Residues Asp-16 and Asp-135 contribute to the active site.

This sequence belongs to the HisA/HisF family. Heterodimer of HisH and HisF.

The protein localises to the cytoplasm. It catalyses the reaction 5-[(5-phospho-1-deoxy-D-ribulos-1-ylimino)methylamino]-1-(5-phospho-beta-D-ribosyl)imidazole-4-carboxamide + L-glutamine = D-erythro-1-(imidazol-4-yl)glycerol 3-phosphate + 5-amino-1-(5-phospho-beta-D-ribosyl)imidazole-4-carboxamide + L-glutamate + H(+). It participates in amino-acid biosynthesis; L-histidine biosynthesis; L-histidine from 5-phospho-alpha-D-ribose 1-diphosphate: step 5/9. Functionally, IGPS catalyzes the conversion of PRFAR and glutamine to IGP, AICAR and glutamate. The HisF subunit catalyzes the cyclization activity that produces IGP and AICAR from PRFAR using the ammonia provided by the HisH subunit. The sequence is that of Imidazole glycerol phosphate synthase subunit HisF from Mycolicibacterium smegmatis (strain ATCC 700084 / mc(2)155) (Mycobacterium smegmatis).